Consider the following 230-residue polypeptide: Urease accessory protein UreG (230 aa).

A disordered region spans residues 1 to 31 (MPPHFLSADSTGQPHRHADRPKRVRTPGEPL). A compositionally biased stretch (basic residues) spans 14-25 (PHRHADRPKRVR). 37–44 (GPVGSGKT) is a binding site for GTP.

This sequence belongs to the SIMIBI class G3E GTPase family. UreG subfamily. As to quaternary structure, homodimer. UreD, UreF and UreG form a complex that acts as a GTP-hydrolysis-dependent molecular chaperone, activating the urease apoprotein by helping to assemble the nickel containing metallocenter of UreC. The UreE protein probably delivers the nickel.

Its subcellular location is the cytoplasm. In terms of biological role, facilitates the functional incorporation of the urease nickel metallocenter. This process requires GTP hydrolysis, probably effectuated by UreG. The protein is Urease accessory protein UreG of Mycobacterium sp. (strain JLS).